A 232-amino-acid polypeptide reads, in one-letter code: MSVISMKQLLEAGVHFGHQTRRWNPKMGEYIFTERNGIYIIDLQKTVKKVEEAYSVMKDIATEGGTILFVGTKKQAQEAVEEEAKRSGMYFVNQRWLGGMLTNFKTIKKRIERLRELEKMEEDGTFEVLPKKEVIKLRHEQEKLEKFLGGIKDMTEMPDALFVVDPRKERIAIQEAHTLGIPVISIVDTNCDPDEVDYVIPGNDDAIRAVKLIASTMANAIIEGKQGVQTEA.

Belongs to the universal ribosomal protein uS2 family.

The sequence is that of Small ribosomal subunit protein uS2 from Alkaliphilus oremlandii (strain OhILAs) (Clostridium oremlandii (strain OhILAs)).